We begin with the raw amino-acid sequence, 156 residues long: Small ribosomal subunit protein uS7c (156 aa).

Belongs to the universal ribosomal protein uS7 family. In terms of assembly, part of the 30S ribosomal subunit.

It localises to the plastid. Its subcellular location is the chloroplast. One of the primary rRNA binding proteins, it binds directly to 16S rRNA where it nucleates assembly of the head domain of the 30S subunit. This chain is Small ribosomal subunit protein uS7c (rps7), found in Porphyra purpurea (Red seaweed).